A 163-amino-acid polypeptide reads, in one-letter code: ADP-ribosylation factor-like protein 2-binding protein (163 aa).

Belongs to the ARL2BP family. In terms of assembly, found in a complex with ARL2BP, ARL2 and SLC25A6. Found in a complex with ARL2, ARL2BP and SLC25A4. Interacts with STAT2, STAT3 and STAT4. Interacts with GTP-bound ARL2 and ARL3; the complex ARL2-ARL2BP as well as ARL2BP alone, binds to SLC25A4. Interaction with ARL2 may be required for targeting to cilia basal body. Interacts with STAT3; interaction is enhanced with ARL2. Expressed in retina pigment epithelial cells (at protein level). Widely expressed.

It is found in the cytoplasm. It localises to the mitochondrion intermembrane space. The protein resides in the cytoskeleton. Its subcellular location is the microtubule organizing center. The protein localises to the centrosome. It is found in the nucleus. It localises to the spindle. The protein resides in the cilium basal body. Functionally, together with ARL2, plays a role in the nuclear translocation, retention and transcriptional activity of STAT3. May play a role as an effector of ARL2. The polypeptide is ADP-ribosylation factor-like protein 2-binding protein (ARL2BP) (Homo sapiens (Human)).